Consider the following 185-residue polypeptide: Elongation factor P (185 aa).

It belongs to the elongation factor P family.

The protein resides in the cytoplasm. It functions in the pathway protein biosynthesis; polypeptide chain elongation. Its function is as follows. Involved in peptide bond synthesis. Stimulates efficient translation and peptide-bond synthesis on native or reconstituted 70S ribosomes in vitro. Probably functions indirectly by altering the affinity of the ribosome for aminoacyl-tRNA, thus increasing their reactivity as acceptors for peptidyl transferase. The chain is Elongation factor P from Methylobacillus flagellatus (strain ATCC 51484 / DSM 6875 / VKM B-1610 / KT).